A 656-amino-acid chain; its full sequence is uncharacterized protein (656 aa).

The interval 623–656 is disordered; that stretch reads EIDIPGTPASIDPEWSRPPGSITDDHVFDAPLHR. Basic and acidic residues predominate over residues 645–656; sequence TDDHVFDAPLHR.

This is an uncharacterized protein from Mycobacterium tuberculosis (strain CDC 1551 / Oshkosh).